The chain runs to 342 residues: Holliday junction branch migration complex subunit RuvB (342 aa).

Residues 1-185 form a large ATPase domain (RuvB-L) region; sequence MREDYLKSDD…FGINARLEYY (185 aa). Residues Leu-24, Arg-25, Gly-66, Lys-69, Thr-70, Thr-71, 132-134, Arg-175, Tyr-185, and Arg-222 contribute to the ATP site; that span reads EDY. Thr-70 contributes to the Mg(2+) binding site. Residues 186–256 form a small ATPAse domain (RuvB-S) region; the sequence is DAKLLTRIVQ…IARIALQALN (71 aa). A head domain (RuvB-H) region spans residues 259 to 342; sequence HNGLDDMDNR…PPAQSGTLFE (84 aa). DNA is bound by residues Arg-314 and Arg-319.

This sequence belongs to the RuvB family. In terms of assembly, homohexamer. Forms an RuvA(8)-RuvB(12)-Holliday junction (HJ) complex. HJ DNA is sandwiched between 2 RuvA tetramers; dsDNA enters through RuvA and exits via RuvB. An RuvB hexamer assembles on each DNA strand where it exits the tetramer. Each RuvB hexamer is contacted by two RuvA subunits (via domain III) on 2 adjacent RuvB subunits; this complex drives branch migration. In the full resolvosome a probable DNA-RuvA(4)-RuvB(12)-RuvC(2) complex forms which resolves the HJ.

It localises to the cytoplasm. The catalysed reaction is ATP + H2O = ADP + phosphate + H(+). Its function is as follows. The RuvA-RuvB-RuvC complex processes Holliday junction (HJ) DNA during genetic recombination and DNA repair, while the RuvA-RuvB complex plays an important role in the rescue of blocked DNA replication forks via replication fork reversal (RFR). RuvA specifically binds to HJ cruciform DNA, conferring on it an open structure. The RuvB hexamer acts as an ATP-dependent pump, pulling dsDNA into and through the RuvAB complex. RuvB forms 2 homohexamers on either side of HJ DNA bound by 1 or 2 RuvA tetramers; 4 subunits per hexamer contact DNA at a time. Coordinated motions by a converter formed by DNA-disengaged RuvB subunits stimulates ATP hydrolysis and nucleotide exchange. Immobilization of the converter enables RuvB to convert the ATP-contained energy into a lever motion, pulling 2 nucleotides of DNA out of the RuvA tetramer per ATP hydrolyzed, thus driving DNA branch migration. The RuvB motors rotate together with the DNA substrate, which together with the progressing nucleotide cycle form the mechanistic basis for DNA recombination by continuous HJ branch migration. Branch migration allows RuvC to scan DNA until it finds its consensus sequence, where it cleaves and resolves cruciform DNA. This chain is Holliday junction branch migration complex subunit RuvB, found in Cytophaga hutchinsonii (strain ATCC 33406 / DSM 1761 / CIP 103989 / NBRC 15051 / NCIMB 9469 / D465).